Reading from the N-terminus, the 368-residue chain is Flagellar P-ring protein (368 aa).

Positions 1 to 24 are cleaved as a signal peptide; that stretch reads MTLTRPLALISALAALILALPADA.

The protein belongs to the FlgI family. In terms of assembly, the basal body constitutes a major portion of the flagellar organelle and consists of four rings (L,P,S, and M) mounted on a central rod.

The protein localises to the periplasm. It is found in the bacterial flagellum basal body. Its function is as follows. Assembles around the rod to form the L-ring and probably protects the motor/basal body from shearing forces during rotation. The chain is Flagellar P-ring protein from Methylobacillus flagellatus (strain ATCC 51484 / DSM 6875 / VKM B-1610 / KT).